Here is a 35-residue protein sequence, read N- to C-terminus: Jingzhaotoxin F6-27.63 (35 aa).

Disulfide bonds link Cys-2–Cys-17, Cys-9–Cys-22, and Cys-16–Cys-29.

The protein belongs to the neurotoxin 10 (Hwtx-1) family. 49 (Jztx-F6) subfamily. In terms of tissue distribution, expressed by the venom gland.

It is found in the secreted. Its function is as follows. Probable ion channel inhibitor. The chain is Jingzhaotoxin F6-27.63 from Chilobrachys guangxiensis (Chinese earth tiger tarantula).